The following is a 1142-amino-acid chain: Protein lin-25 (1142 aa).

Positions 600–613 are enriched in acidic residues; the sequence is IEEEIEEEEEDIEP. Residues 600–706 form a disordered region; it reads IEEEIEEEEE…EKPKEPLEPT (107 aa). 3 stretches are compositionally biased toward basic and acidic residues: residues 614–627, 652–662, and 679–703; these read EVVK…TEKE, DEQKTEEKMDT, and DPPK…KEPL.

The protein resides in the nucleus. It is found in the cytoplasm. Its function is as follows. Participates in the inductive signaling pathway downstream of let-60 Ras and the RAF/MAP kinase cascade to regulate specification and differentiation of many cell types. Positively regulates the fate of vulval precursor cells. Required for induction of the P12 and excretory duct cell fates. In males, it is also required for proper formation of spicules. Does not function in the signaling pathway that promotes exit from pachytene. The polypeptide is Protein lin-25 (Caenorhabditis briggsae).